A 215-amino-acid polypeptide reads, in one-letter code: Cytochrome b6 (215 aa).

A helical transmembrane segment spans residues 32–52; sequence IFYCLGGITLTCFLVQVATGF. Cys35 is a heme c binding site. Positions 86 and 100 each coordinate heme b. 3 helical membrane-spanning segments follow: residues 90–110, 116–136, and 186–206; these read ASMM…TGGF, LTWV…VTGY, and LHTF…FSMI. Heme b contacts are provided by His187 and His202.

It belongs to the cytochrome b family. PetB subfamily. The 4 large subunits of the cytochrome b6-f complex are cytochrome b6, subunit IV (17 kDa polypeptide, PetD), cytochrome f and the Rieske protein, while the 4 small subunits are PetG, PetL, PetM and PetN. The complex functions as a dimer. Heme b serves as cofactor. Heme c is required as a cofactor.

It localises to the plastid. Its subcellular location is the chloroplast thylakoid membrane. Functionally, component of the cytochrome b6-f complex, which mediates electron transfer between photosystem II (PSII) and photosystem I (PSI), cyclic electron flow around PSI, and state transitions. This Piper cenocladum (Ant piper) protein is Cytochrome b6.